We begin with the raw amino-acid sequence, 257 residues long: Undecaprenyl-diphosphatase (257 aa).

The next 8 helical transmembrane spans lie at 4-24 (LIRV…PISS), 41-61 (SVTL…VVFW), 74-94 (VIGL…TIKT), 103-123 (PLLA…LGRL), 133-153 (LGLG…LPGI), 173-193 (SVTF…VLAI), 209-229 (VLSI…KWLI), and 236-256 (RLHW…LLNL).

The protein belongs to the UppP family.

The protein localises to the cell inner membrane. It carries out the reaction di-trans,octa-cis-undecaprenyl diphosphate + H2O = di-trans,octa-cis-undecaprenyl phosphate + phosphate + H(+). Functionally, catalyzes the dephosphorylation of undecaprenyl diphosphate (UPP). Confers resistance to bacitracin. This chain is Undecaprenyl-diphosphatase, found in Rhodopirellula baltica (strain DSM 10527 / NCIMB 13988 / SH1).